Consider the following 507-residue polypeptide: O-fucosyltransferase 30 (507 aa).

A helical; Signal-anchor for type II membrane protein membrane pass occupies residues 26-46 (AIFLCSVSILVVFFIVVFFIT). N-linked (GlcNAc...) asparagine glycosylation is found at asparagine 110, asparagine 146, asparagine 398, and asparagine 410.

The protein belongs to the glycosyltransferase GT106 family.

The protein localises to the membrane. It functions in the pathway glycan metabolism. This is O-fucosyltransferase 30 from Arabidopsis thaliana (Mouse-ear cress).